We begin with the raw amino-acid sequence, 632 residues long: Putative golgin subfamily A member 8I (632 aa).

The disordered stretch occupies residues 1–77 (MAEETQHNKL…SSATLKDLES (77 aa)). Residues 38–50 (TNGSIPQTATSGG) are compositionally biased toward polar residues. Coiled-coil stretches lie at residues 86–154 (LDSR…HMKR) and 209–421 (KLEQ…SLMA). The span at 352–362 (KQEERIQEQHK) shows a compositional bias: basic and acidic residues. Disordered stretches follow at residues 352–383 (KQEE…ENKS), 423–445 (PGEG…PMPS), 496–524 (LSEP…DEGE), and 550–569 (AHNP…ELGA). Residues 508-520 (LGGGHHQAGAQGG) are compositionally biased toward gly residues. Positions 529–632 (AADGIAAYSN…CWAWLPRRRR (104 aa)) are golgi-targeting domain. Residues 555 to 568 (DEPGPGAPAPQELG) are compositionally biased toward low complexity.

The protein belongs to the GOLGA8 family.

It localises to the golgi apparatus. The protein resides in the golgi stack membrane. Its function is as follows. May be involved in maintaining Golgi structure. The protein is Putative golgin subfamily A member 8I of Homo sapiens (Human).